We begin with the raw amino-acid sequence, 398 residues long: Putative glutamate--cysteine ligase 2 (398 aa).

Belongs to the glutamate--cysteine ligase type 2 family. YbdK subfamily.

It catalyses the reaction L-cysteine + L-glutamate + ATP = gamma-L-glutamyl-L-cysteine + ADP + phosphate + H(+). Functionally, ATP-dependent carboxylate-amine ligase which exhibits weak glutamate--cysteine ligase activity. In Micrococcus luteus (strain ATCC 4698 / DSM 20030 / JCM 1464 / CCM 169 / CCUG 5858 / IAM 1056 / NBRC 3333 / NCIMB 9278 / NCTC 2665 / VKM Ac-2230) (Micrococcus lysodeikticus), this protein is Putative glutamate--cysteine ligase 2.